The sequence spans 165 residues: Transcription factor TCP16 (165 aa).

The segment covering 1 to 11 (MDSKNGINNSQ) has biased composition (polar residues). 2 disordered regions span residues 1 to 21 (MDSK…KDRH) and 146 to 165 (GNAT…TTTV). The span at 12 to 21 (KARRTPKDRH) shows a compositional bias: basic residues. Positions 17–71 (PKDRHLKIGGRDRRIRIPPSVAPQLFRLTKELGFKTDGETVSWLLQNAEPAIFAA) constitute a TCP domain. Residues 148-165 (ATASDTTSAATTTATTTV) show a composition bias toward low complexity.

Mostly in anther in young buds.

It is found in the nucleus. In terms of biological role, required during early processes in pollen development. This Arabidopsis thaliana (Mouse-ear cress) protein is Transcription factor TCP16 (TCP16).